An 82-amino-acid chain; its full sequence is RNA-binding protein Hfq (82 aa).

A Sm domain is found at 10–70 (DIFLNGARKN…LSTITPSKAI (61 aa)).

This sequence belongs to the Hfq family. In terms of assembly, homohexamer.

Functionally, RNA chaperone that binds small regulatory RNA (sRNAs) and mRNAs to facilitate mRNA translational regulation in response to envelope stress, environmental stress and changes in metabolite concentrations. Also binds with high specificity to tRNAs. The protein is RNA-binding protein Hfq of Clostridium kluyveri (strain NBRC 12016).